The primary structure comprises 515 residues: Serine/threonine-protein kinase STE7 (515 aa).

A Protein kinase domain is found at 191–466 (LVQLGKIGAG…IHELLHHDLI (276 aa)). ATP is bound by residues 197 to 205 (IGAGNSGTV) and lysine 220. Aspartate 331 acts as the Proton acceptor in catalysis. Serine 359 is subject to Phosphoserine. At threonine 363 the chain carries Phosphothreonine.

It belongs to the protein kinase superfamily. STE Ser/Thr protein kinase family. MAP kinase kinase subfamily.

The catalysed reaction is L-seryl-[protein] + ATP = O-phospho-L-seryl-[protein] + ADP + H(+). The enzyme catalyses L-threonyl-[protein] + ATP = O-phospho-L-threonyl-[protein] + ADP + H(+). It catalyses the reaction L-tyrosyl-[protein] + ATP = O-phospho-L-tyrosyl-[protein] + ADP + H(+). Phosphorylated at multiple sites in response to pheromone. Functionally, serine/threonine protein kinase required for cell-type-specific transcription and signal transduction in yeast. It is thought that it is phosphorylated by the ste11 protein kinase and that it can phosphorylate the FUS3 and or KSS1 kinases. This chain is Serine/threonine-protein kinase STE7 (STE7), found in Saccharomyces cerevisiae (strain ATCC 204508 / S288c) (Baker's yeast).